The following is a 514-amino-acid chain: Bifunctional purine biosynthesis protein PurH (514 aa).

The MGS-like domain maps to 1-145; it reads MIKRALISVS…KNYQDVAVIV (145 aa).

This sequence belongs to the PurH family.

It catalyses the reaction (6R)-10-formyltetrahydrofolate + 5-amino-1-(5-phospho-beta-D-ribosyl)imidazole-4-carboxamide = 5-formamido-1-(5-phospho-D-ribosyl)imidazole-4-carboxamide + (6S)-5,6,7,8-tetrahydrofolate. The catalysed reaction is IMP + H2O = 5-formamido-1-(5-phospho-D-ribosyl)imidazole-4-carboxamide. Its pathway is purine metabolism; IMP biosynthesis via de novo pathway; 5-formamido-1-(5-phospho-D-ribosyl)imidazole-4-carboxamide from 5-amino-1-(5-phospho-D-ribosyl)imidazole-4-carboxamide (10-formyl THF route): step 1/1. It participates in purine metabolism; IMP biosynthesis via de novo pathway; IMP from 5-formamido-1-(5-phospho-D-ribosyl)imidazole-4-carboxamide: step 1/1. In Ruminiclostridium cellulolyticum (strain ATCC 35319 / DSM 5812 / JCM 6584 / H10) (Clostridium cellulolyticum), this protein is Bifunctional purine biosynthesis protein PurH.